The primary structure comprises 147 residues: UPF0306 protein YhbP (147 aa).

This sequence belongs to the UPF0306 family.

The chain is UPF0306 protein YhbP from Escherichia coli O17:K52:H18 (strain UMN026 / ExPEC).